A 336-amino-acid chain; its full sequence is MTIKVAINGYGRIGRNVLRAHYEGGKRHDIEIVAINDLGNAATNAHLTQYDTVHGRFPGEVSVDGDAFRVNGDRIRVLAQRNPAELPWGELGVDVVMECTGLFTSKEKASAHLRGGAKKVIISAPGGKDVDATIVYGVNHGVLKATDTVISNASCTTNCLAPLVKPLHEKLGLVNGLMTTVHSYTNDQVLTDVYHEDLRRARSATMSMIPTKTGAAAAVGLVMPELDGRLDGFAVRVPTINVSLVDLSFVAARPTTVEEVNGILKAAAEGELKGILDYNTAPLVSVDFNHNPASSTFDATLTKVNGTLVKVSAWYDNEWGFSNRMLDTAVALAHAR.

Residues 12-13 (RI), Asp-37, Arg-81, and Ser-123 contribute to the NAD(+) site. Residues 154–156 (SCT) and Thr-185 contribute to the D-glyceraldehyde 3-phosphate site. The active-site Nucleophile is Cys-155. Asn-186 serves as a coordination point for NAD(+). Residues Arg-200, 213–214 (TG), and Arg-236 each bind D-glyceraldehyde 3-phosphate. Asn-317 lines the NAD(+) pocket.

The protein belongs to the glyceraldehyde-3-phosphate dehydrogenase family. As to quaternary structure, homotetramer.

It carries out the reaction D-glyceraldehyde 3-phosphate + phosphate + NAD(+) = (2R)-3-phospho-glyceroyl phosphate + NADH + H(+). It participates in carbohydrate biosynthesis; Calvin cycle. In terms of biological role, could be involved in carbon fixation as a component of the Calvin cycle. Catalyzes the oxidative phosphorylation of glyceraldehyde 3-phosphate (G3P) to 1,3-bisphosphoglycerate (BPG) using the cofactor NAD. The first reaction step involves the formation of a hemiacetal intermediate between G3P and a cysteine residue, and this hemiacetal intermediate is then oxidized to a thioester, with concomitant reduction of NAD to NADH. The reduced NADH is then exchanged with the second NAD, and the thioester is attacked by a nucleophilic inorganic phosphate to produce BPG. In Cupriavidus necator (strain ATCC 17699 / DSM 428 / KCTC 22496 / NCIMB 10442 / H16 / Stanier 337) (Ralstonia eutropha), this protein is Glyceraldehyde-3-phosphate dehydrogenase, chromosomal (cbbGC).